Here is a 433-residue protein sequence, read N- to C-terminus: MKICGLEKFRVFLSLISMVSLLCNGVNGFTIVRSMAVNGESVPDRFSNPSCRPSDCALKRASTTNGCSTTRDCCSCQCSKTRATYLTSPFNRCTTSEYIDEDCSSFFVLPDDSPPPVADITKPGHINFFSETRCHKGLRTRSWSHSVDATSWTTGKPNGFSVELVEGSSSSWKWRLSWQNGMDAKFSGLIIKLEFSCQNTRSGCFLMKSKGNYTIPNSEQWPSIIPTDVSFNLTGENANPTANSGTSARSNRNEQNKMEEPARNQAELEPKKTGVVVAGVTVSLAAGFVLALATLLLMKKKQTSLAVNAKARPNSYLGYEEPVDSAGRPEQTATESPSFDNEFYTTDCVLSLSGNNVGGKVTRMGPLPPLPGEESIYAEPMIKRSVAYQGLAEKNKQQDAGTACNVQPQPECKVIEKTSNENSHDKGTDEDKG.

Residues 1-28 form the signal peptide; the sequence is MKICGLEKFRVFLSLISMVSLLCNGVNG. Residues 29 to 274 are Extracellular-facing; that stretch reads FTIVRSMAVN…QAELEPKKTG (246 aa). Residues 235–250 are compositionally biased toward polar residues; sequence GENANPTANSGTSARS. Residues 235-266 are disordered; sequence GENANPTANSGTSARSNRNEQNKMEEPARNQA. Positions 251 to 266 are enriched in basic and acidic residues; that stretch reads NRNEQNKMEEPARNQA. Residues 275 to 295 traverse the membrane as a helical segment; that stretch reads VVVAGVTVSLAAGFVLALATL. The Cytoplasmic segment spans residues 296 to 433; it reads LLMKKKQTSL…HDKGTDEDKG (138 aa). 2 disordered regions span residues 320–340 and 413–433; these read EEPV…PSFD and KVIE…EDKG.

In terms of tissue distribution, component of the acid-insoluble and acid-soluble organic matrix of the aragonitic skeleton (at protein level).

It is found in the membrane. This is an uncharacterized protein from Acropora millepora (Staghorn coral).